A 302-amino-acid polypeptide reads, in one-letter code: Pantothenate synthetase (302 aa).

30–37 (MGALHGGH) serves as a coordination point for ATP. Residue His37 is the Proton donor of the active site. Gln61 is a (R)-pantoate binding site. Gln61 is a binding site for beta-alanine. 147–150 (GEKD) is a binding site for ATP. Gln153 is a (R)-pantoate binding site. ATP-binding positions include Val176 and 184-187 (KSSR).

This sequence belongs to the pantothenate synthetase family. Homodimer.

Its subcellular location is the cytoplasm. It catalyses the reaction (R)-pantoate + beta-alanine + ATP = (R)-pantothenate + AMP + diphosphate + H(+). The protein operates within cofactor biosynthesis; (R)-pantothenate biosynthesis; (R)-pantothenate from (R)-pantoate and beta-alanine: step 1/1. Catalyzes the condensation of pantoate with beta-alanine in an ATP-dependent reaction via a pantoyl-adenylate intermediate. The polypeptide is Pantothenate synthetase (Shouchella clausii (strain KSM-K16) (Alkalihalobacillus clausii)).